The following is a 213-amino-acid chain: Ras-related protein Rab-39B (213 aa).

GTP-binding residues include Ser17, Gly20, Lys21, Ser22, Cys23, Ser37, and Thr40. Position 22 (Ser22) interacts with Mg(2+). Residues 35–43 are switch-I; that stretch reads QVSDPTVGV. The Mg(2+) site is built by Thr40 and Asp64. Residues Gly67, His123, Lys124, Asp126, Ala154, and Arg155 each coordinate GTP. Residues 67–83 form a switch-II region; that stretch reads GQERFRSITRAYYRNSV. At Ser201 the chain carries Phosphoserine. Residues Cys211 and Cys213 are each lipidated (S-geranylgeranyl cysteine). A Cysteine methyl ester modification is found at Cys213.

The protein belongs to the small GTPase superfamily. Rab family. In terms of assembly, interacts (GDP-bound) with C9orf72; C9orf72 in complex with SMCR8 acts as a GEF for RAB39B. Interacts (in GTP-bound form) with PICK1 (via PDZ domain); a PICK1 homodimer may allow simultaneous association of RAB39B and GRIA2 to PICK1 which is involved in GRIA2 trafficking. Interacts with isoform c of RASSF1; the interaction is strong. Interacts with isoform a of RASSF1; the interaction is weak. Interacts with the DLG4/PSD-95. Interacts (GTP-bound) with HOPS complex components VPS39 and VPS41. The cofactor is Mg(2+). Highly expressed in the brain.

It is found in the cell membrane. It localises to the cytoplasmic vesicle membrane. The protein localises to the golgi apparatus. The protein resides in the cytoplasmic vesicle. Its subcellular location is the autophagosome membrane. It is found in the autolysosome membrane. The enzyme catalyses GTP + H2O = GDP + phosphate + H(+). Regulated by guanine nucleotide exchange factors (GEFs) including C9orf72-SMCR8 complex, which promote the exchange of bound GDP for free GTP. Regulated by GTPase activating proteins (GAPs) which increase the GTP hydrolysis activity. Inhibited by GDP dissociation inhibitors (GDIs). The small GTPases Rab are key regulators of intracellular membrane trafficking, from the formation of transport vesicles to their fusion with membranes. Rabs cycle between an inactive GDP-bound form and an active GTP-bound form that is able to recruit to membranes different sets of downstream effectors directly responsible for vesicle formation, movement, tethering and fusion. RAB39B is involved in autophagy and may function in autophagosome formation. Binds downstream effector PICK1 to ensure selectively GRIA2 exit from the endoplasmic reticulum to the Golgi and to regulate AMPAR composition at the post-synapses and thus synaptic transmission. May regulate the homeostasis of SNCA/alpha-synuclein. The chain is Ras-related protein Rab-39B from Homo sapiens (Human).